Here is a 317-residue protein sequence, read N- to C-terminus: Phospho-N-acetylmuramoyl-pentapeptide-transferase (317 aa).

9 helical membrane passes run Ile-6 to Pro-26, Pro-52 to Gly-72, Ala-78 to Leu-98, Met-114 to Thr-134, Ile-145 to Ala-165, Gly-171 to Ser-191, Leu-194 to Leu-214, Val-223 to Leu-244, and Lys-297 to Leu-317.

Belongs to the glycosyltransferase 4 family. MraY subfamily. It depends on Mg(2+) as a cofactor.

The protein localises to the cell membrane. The enzyme catalyses UDP-N-acetyl-alpha-D-muramoyl-L-alanyl-gamma-D-glutamyl-meso-2,6-diaminopimeloyl-D-alanyl-D-alanine + di-trans,octa-cis-undecaprenyl phosphate = di-trans,octa-cis-undecaprenyl diphospho-N-acetyl-alpha-D-muramoyl-L-alanyl-D-glutamyl-meso-2,6-diaminopimeloyl-D-alanyl-D-alanine + UMP. Its pathway is cell wall biogenesis; peptidoglycan biosynthesis. Catalyzes the initial step of the lipid cycle reactions in the biosynthesis of the cell wall peptidoglycan: transfers peptidoglycan precursor phospho-MurNAc-pentapeptide from UDP-MurNAc-pentapeptide onto the lipid carrier undecaprenyl phosphate, yielding undecaprenyl-pyrophosphoryl-MurNAc-pentapeptide, known as lipid I. This is Phospho-N-acetylmuramoyl-pentapeptide-transferase from Clostridium perfringens (strain 13 / Type A).